The sequence spans 2471 residues: Probable polyketide synthase 24 (2471 aa).

The Ketosynthase family 3 (KS3) domain maps to 21-449; that stretch reads ENLVAIVGVG…GSNCCLVLSQ (429 aa). Residues cysteine 190, histidine 332, and histidine 372 each act as for beta-ketoacyl synthase activity in the active site. The segment at 654–687 is acyl/malonyl transferase; that stretch reads GIKASFMLGHSLGEVTTAYCSGMIDIDQLCYLIY. The For acyl/malonyl transferase activity role is filled by serine 664. Positions 953–1075 are N-terminal hotdog fold; that stretch reads ISILGNSMQD…SNFHLNSNDN (123 aa). The 293-residue stretch at 953-1245 folds into the PKS/mFAS DH domain; it reads ISILGNSMQD…VKSLTPVKDP (293 aa). Catalysis depends on histidine 987, which acts as the Proton acceptor; for dehydratase activity. The C-terminal hotdog fold stretch occupies residues 1094–1245; it reads NLSSIPWDEF…VKSLTPVKDP (152 aa). Aspartate 1157 serves as the catalytic Proton donor; for dehydratase activity. A coiled-coil region spans residues 1426 to 1469; it reads IINEQQQQQQQQQQQQQQQQQQQQQLLNNENNKESLKNLLVNCN. A Carrier domain is found at 2336–2413; sequence SSSTNVKNKF…MVYQIINDSL (78 aa). Residue serine 2373 is modified to O-(pantetheine 4'-phosphoryl)serine.

The cofactor is pantetheine 4'-phosphate.

Probable polyketide synthase. The polypeptide is Probable polyketide synthase 24 (pks24) (Dictyostelium discoideum (Social amoeba)).